Reading from the N-terminus, the 187-residue chain is Large ribosomal subunit protein uL5 (187 aa).

Belongs to the universal ribosomal protein uL5 family. As to quaternary structure, part of the 50S ribosomal subunit; part of the 5S rRNA/L5/L18/L25 subcomplex. Contacts the 5S rRNA and the P site tRNA. Forms a bridge to the 30S subunit in the 70S ribosome.

Its function is as follows. This is one of the proteins that bind and probably mediate the attachment of the 5S RNA into the large ribosomal subunit, where it forms part of the central protuberance. In the 70S ribosome it contacts protein S13 of the 30S subunit (bridge B1b), connecting the 2 subunits; this bridge is implicated in subunit movement. Contacts the P site tRNA; the 5S rRNA and some of its associated proteins might help stabilize positioning of ribosome-bound tRNAs. The sequence is that of Large ribosomal subunit protein uL5 from Malacoplasma penetrans (strain HF-2) (Mycoplasma penetrans).